A 113-amino-acid chain; its full sequence is MAGYRKLGRPTDQRKAMLRNLVTSFLKHGKIETTETRAKETRSIAEKMITLAKRGDLHARRQVLSFVTEETVVQRLFEEIAPKYAERNGGYTRIYKVGPRRGDGAEVVILELV.

The protein belongs to the bacterial ribosomal protein bL17 family. Part of the 50S ribosomal subunit. Contacts protein L32.

The protein is Large ribosomal subunit protein bL17 of Clostridium botulinum (strain ATCC 19397 / Type A).